The following is an 887-amino-acid chain: Translation initiation factor IF-2 (887 aa).

The interval 1-291 is disordered; it reads MTDQADTSER…RRRVERERKK (291 aa). The span at 58–117 shows a compositional bias: low complexity; it reads AAPAAAPAAAPAAAEEVAKKPVAAPEVKPAAPVEERPAPVAKAAPEVKAVPAPAPAAAPA. Basic and acidic residues-rich tracts occupy residues 148–178, 185–194, 201–215, and 267–276; these read SARE…EAER, AAEEASRHTA, RAAE…DDRP, and AFDDESERQR. The tr-type G domain occupies 385-553; that stretch reads ARAPVVTVMG…TILLQAELLD (169 aa). The tract at residues 394–401 is G1; sequence GHVDHGKT. Position 394-401 (394-401) interacts with GTP; the sequence is GHVDHGKT. Residues 419–423 form a G2 region; the sequence is GITQH. Residues 441–444 form a G3 region; the sequence is DTPG. GTP contacts are provided by residues 441–445 and 495–498; these read DTPGH and NKMD. The G4 stretch occupies residues 495–498; it reads NKMD. Residues 531 to 533 are G5; that stretch reads SAK.

It belongs to the TRAFAC class translation factor GTPase superfamily. Classic translation factor GTPase family. IF-2 subfamily.

Its subcellular location is the cytoplasm. One of the essential components for the initiation of protein synthesis. Protects formylmethionyl-tRNA from spontaneous hydrolysis and promotes its binding to the 30S ribosomal subunits. Also involved in the hydrolysis of GTP during the formation of the 70S ribosomal complex. The protein is Translation initiation factor IF-2 of Parvibaculum lavamentivorans (strain DS-1 / DSM 13023 / NCIMB 13966).